Reading from the N-terminus, the 467-residue chain is ATP synthase subunit beta (467 aa).

Residue 156–163 (GGAGVGKT) coordinates ATP.

It belongs to the ATPase alpha/beta chains family. F-type ATPases have 2 components, CF(1) - the catalytic core - and CF(0) - the membrane proton channel. CF(1) has five subunits: alpha(3), beta(3), gamma(1), delta(1), epsilon(1). CF(0) has three main subunits: a(1), b(2) and c(9-12). The alpha and beta chains form an alternating ring which encloses part of the gamma chain. CF(1) is attached to CF(0) by a central stalk formed by the gamma and epsilon chains, while a peripheral stalk is formed by the delta and b chains.

The protein localises to the cell inner membrane. It catalyses the reaction ATP + H2O + 4 H(+)(in) = ADP + phosphate + 5 H(+)(out). In terms of biological role, produces ATP from ADP in the presence of a proton gradient across the membrane. The catalytic sites are hosted primarily by the beta subunits. This is ATP synthase subunit beta from Ralstonia nicotianae (strain ATCC BAA-1114 / GMI1000) (Ralstonia solanacearum).